A 697-amino-acid polypeptide reads, in one-letter code: Long-chain-fatty-acid--CoA ligase 6 (697 aa).

A helical; Signal-anchor for type III membrane protein transmembrane segment spans residues 25–45 (LSATTLVSVGALAAVLAYWLT). Topologically, residues 46 to 697 (HRPKALQPPC…QIEELYLVSV (652 aa)) are cytoplasmic.

It belongs to the ATP-dependent AMP-binding enzyme family. It depends on Mg(2+) as a cofactor.

The protein resides in the mitochondrion outer membrane. Its subcellular location is the peroxisome membrane. The protein localises to the microsome membrane. It localises to the endoplasmic reticulum membrane. The catalysed reaction is a long-chain fatty acid + ATP + CoA = a long-chain fatty acyl-CoA + AMP + diphosphate. It catalyses the reaction (5Z,8Z,11Z,14Z)-eicosatetraenoate + ATP + CoA = (5Z,8Z,11Z,14Z)-eicosatetraenoyl-CoA + AMP + diphosphate. The enzyme catalyses 15-hydroxy-(5Z,8Z,11Z,13E)-eicosatetraenoate + ATP + CoA = 15-hydroxy-(5Z,8Z,11Z,13E)-eicosatetraenoyl-CoA + AMP + diphosphate. It carries out the reaction 12-hydroxy-(5Z,8Z,10E,14Z)-eicosatetraenoate + ATP + CoA = 12-hydroxy-(5Z,8Z,10E,14Z)-eicosatetraenoyl-CoA + AMP + diphosphate. The catalysed reaction is 5-hydroxy-(6E,8Z,11Z,14Z)-eicosatetraenoate + ATP + CoA = 5-hydroxy-(6E,8Z,11Z,14Z)-eicosatetraenoyl-CoA + AMP + diphosphate. It catalyses the reaction hexadecanoate + ATP + CoA = hexadecanoyl-CoA + AMP + diphosphate. The enzyme catalyses (E)-hexadec-2-enoate + ATP + CoA = (2E)-hexadecenoyl-CoA + AMP + diphosphate. In terms of biological role, catalyzes the conversion of long-chain fatty acids to their active form acyl-CoA for both synthesis of cellular lipids, and degradation via beta-oxidation. Plays an important role in fatty acid metabolism in brain and the acyl-CoAs produced may be utilized exclusively for the synthesis of the brain lipid. The sequence is that of Long-chain-fatty-acid--CoA ligase 6 (Acsl6) from Mus musculus (Mouse).